Consider the following 477-residue polypeptide: Inner membrane transporter YgjI (477 aa).

The Periplasmic segment spans residues 1–8; that stretch reads MSDTKRNT. A helical membrane pass occupies residues 9 to 29; that stretch reads IGKFGLLSLTFAAVYSFNNVI. The Cytoplasmic portion of the chain corresponds to 30 to 41; the sequence is NNNIELGLASAP. The chain crosses the membrane as a helical span at residues 42–62; sequence MFFLATIFYFIPFCLIIAEFV. Residues 63–83 are Periplasmic-facing; sequence SLNKNSEAGVYAWVKSSLGGR. A helical transmembrane segment spans residues 84 to 104; that stretch reads WAFITAYTYWFVNLFFFTSLL. The Cytoplasmic portion of the chain corresponds to 105–120; that stretch reads PRVIAYASYAFLGYEY. Residues 121 to 141 traverse the membrane as a helical segment; it reads IMTPVATTIISMVLFAFSTWV. Residues 142–158 are Periplasmic-facing; that stretch reads STNGAKMLGPITSVTST. A helical membrane pass occupies residues 159 to 179; sequence LMLLLTLSYILLAGTALVGGV. Residues 180-196 lie on the Cytoplasmic side of the membrane; it reads QPADAITVDAMIPNFNW. A helical membrane pass occupies residues 197 to 217; the sequence is AFLGVTTWIFMAAGGAESVAV. Over 218–232 the chain is Periplasmic; it reads YVNDVKGGSKSFVKV. The chain crosses the membrane as a helical span at residues 233 to 253; the sequence is IILAGIFIGVLYSVSSVLINV. The Cytoplasmic segment spans residues 254 to 263; the sequence is FVSSKELKFT. The chain crosses the membrane as a helical span at residues 264–284; the sequence is GGSVQVFHGMAAYFGLPEALM. Residues 285–286 lie on the Periplasmic side of the membrane; sequence NR. A helical membrane pass occupies residues 287 to 307; it reads FVGLVSFTAMFGSLLMWTATP. Residues 308–335 are Cytoplasmic-facing; sequence VKIFFSEIPEGIFGKKTVELNENGVPAR. Residues 336 to 356 form a helical membrane-spanning segment; the sequence is AAWIQFLIVIPLMIIPMLGSN. Over 357 to 364 the chain is Periplasmic; the sequence is TVQDLMNT. Residues 365–385 traverse the membrane as a helical segment; that stretch reads IINMTAAASMLPPLFIMLAYL. The Cytoplasmic portion of the chain corresponds to 386–405; sequence NLRAKLDHLPRDFRMGSRRT. A helical transmembrane segment spans residues 406-426; sequence GIIVVSMLIAIFAVGFVASTF. Residues 427–431 are Periplasmic-facing; the sequence is PTGAN. A helical transmembrane segment spans residues 432–452; that stretch reads ILTIIFYNVGGIVIFLGFAWW. Topologically, residues 453-477 are cytoplasmic; that stretch reads KYSKYIKGLTAEERHIEATPASNVD.

Belongs to the amino acid-polyamine-organocation (APC) superfamily.

Its subcellular location is the cell inner membrane. This is Inner membrane transporter YgjI (ygjI) from Escherichia coli (strain K12).